The following is a 320-amino-acid chain: Glutathione synthetase (320 aa).

The region spanning Lys-127–Glu-312 is the ATP-grasp domain. Residue Leu-153–Gly-209 coordinates ATP. Mg(2+) is bound by residues Glu-283 and Asn-285.

Belongs to the prokaryotic GSH synthase family. Requires Mg(2+) as cofactor. Mn(2+) serves as cofactor.

It catalyses the reaction gamma-L-glutamyl-L-cysteine + glycine + ATP = glutathione + ADP + phosphate + H(+). Its pathway is sulfur metabolism; glutathione biosynthesis; glutathione from L-cysteine and L-glutamate: step 2/2. The chain is Glutathione synthetase from Nitrosomonas europaea (strain ATCC 19718 / CIP 103999 / KCTC 2705 / NBRC 14298).